The primary structure comprises 177 residues: Large ribosomal subunit protein uL6 (177 aa).

It belongs to the universal ribosomal protein uL6 family. In terms of assembly, part of the 50S ribosomal subunit.

Its function is as follows. This protein binds to the 23S rRNA, and is important in its secondary structure. It is located near the subunit interface in the base of the L7/L12 stalk, and near the tRNA binding site of the peptidyltransferase center. This Histophilus somni (strain 129Pt) (Haemophilus somnus) protein is Large ribosomal subunit protein uL6.